Reading from the N-terminus, the 357-residue chain is Holliday junction branch migration complex subunit RuvB (357 aa).

The segment at 3–193 is large ATPase domain (RuvB-L); the sequence is WDDTTDAEAA…FGFTAHMEFY (191 aa). ATP contacts are provided by residues leucine 32, arginine 33, glycine 74, lysine 77, threonine 78, threonine 79, 140-142, arginine 183, tyrosine 193, and arginine 230; that span reads EDF. Threonine 78 serves as a coordination point for Mg(2+). A small ATPAse domain (RuvB-S) region spans residues 194-264; sequence GPAELERVIH…IAAAALAVYE (71 aa). Residues 267–357 are head domain (RuvB-H); the sequence is ARGLDRLDRG…GNGQPDLFGA (91 aa). 3 residues coordinate DNA: arginine 303, arginine 322, and arginine 327. Residues 337–357 are disordered; sequence LGLTPPRPQSSGNGQPDLFGA.

This sequence belongs to the RuvB family. As to quaternary structure, homohexamer. Forms an RuvA(8)-RuvB(12)-Holliday junction (HJ) complex. HJ DNA is sandwiched between 2 RuvA tetramers; dsDNA enters through RuvA and exits via RuvB. An RuvB hexamer assembles on each DNA strand where it exits the tetramer. Each RuvB hexamer is contacted by two RuvA subunits (via domain III) on 2 adjacent RuvB subunits; this complex drives branch migration. In the full resolvosome a probable DNA-RuvA(4)-RuvB(12)-RuvC(2) complex forms which resolves the HJ.

It localises to the cytoplasm. It catalyses the reaction ATP + H2O = ADP + phosphate + H(+). The RuvA-RuvB-RuvC complex processes Holliday junction (HJ) DNA during genetic recombination and DNA repair, while the RuvA-RuvB complex plays an important role in the rescue of blocked DNA replication forks via replication fork reversal (RFR). RuvA specifically binds to HJ cruciform DNA, conferring on it an open structure. The RuvB hexamer acts as an ATP-dependent pump, pulling dsDNA into and through the RuvAB complex. RuvB forms 2 homohexamers on either side of HJ DNA bound by 1 or 2 RuvA tetramers; 4 subunits per hexamer contact DNA at a time. Coordinated motions by a converter formed by DNA-disengaged RuvB subunits stimulates ATP hydrolysis and nucleotide exchange. Immobilization of the converter enables RuvB to convert the ATP-contained energy into a lever motion, pulling 2 nucleotides of DNA out of the RuvA tetramer per ATP hydrolyzed, thus driving DNA branch migration. The RuvB motors rotate together with the DNA substrate, which together with the progressing nucleotide cycle form the mechanistic basis for DNA recombination by continuous HJ branch migration. Branch migration allows RuvC to scan DNA until it finds its consensus sequence, where it cleaves and resolves cruciform DNA. This Streptomyces coelicolor (strain ATCC BAA-471 / A3(2) / M145) protein is Holliday junction branch migration complex subunit RuvB.